The sequence spans 639 residues: Tubulin--tyrosine ligase-like protein 12 (639 aa).

The TTL domain occupies 295-639 (PQGHVFRVHC…TDNCHVTRII (345 aa)). Residues 445–448 (SKYI), Lys-463, and Asp-465 contribute to the ATP site.

This sequence belongs to the tubulin--tyrosine ligase family. In terms of assembly, interacts with MAVS; the interaction prevents MAVS binding to TBK1 and IKBKE. Interacts (via N-terminus) with TBK1 (via protein kinase domain). Interacts (via TTL domain) with IKBKE (via protein kinase domain). Interacts with tubulin alpha. Interacts with histone H3 and histone H4 (when trimethylated at 'Lys-20' (H4K20me3)). Interacts with CBX3. Widely expressed with highest levels in brain, kidney, liver, lung, muscle and testis.

Its subcellular location is the cytoplasm. The protein resides in the midbody. It localises to the cytoskeleton. It is found in the microtubule organizing center. The protein localises to the centrosome. Its subcellular location is the spindle. The protein resides in the nucleus. Negatively regulates post-translational modifications of tubulin, including detyrosination of the C-terminus and polyglutamylation of glutamate residues. Also, indirectly promotes histone H4 trimethylation at 'Lys-20' (H4K20me3). Probably by controlling tubulin and/or histone H4 post-translational modifications, plays a role in mitosis and in maintaining chromosome number stability. During RNA virus-mediated infection, acts as a negative regulator of the RIG-I pathway by preventing MAVS binding to TBK1 and IKBKE. In Mus musculus (Mouse), this protein is Tubulin--tyrosine ligase-like protein 12.